Reading from the N-terminus, the 204-residue chain is Ribosomal RNA small subunit methyltransferase G (204 aa).

S-adenosyl-L-methionine contacts are provided by residues Gly-74, Leu-79, 125 to 126, and Arg-138; that span reads AY.

This sequence belongs to the methyltransferase superfamily. RNA methyltransferase RsmG family.

It localises to the cytoplasm. Its function is as follows. Specifically methylates the N7 position of a guanine in 16S rRNA. The protein is Ribosomal RNA small subunit methyltransferase G of Brachyspira hyodysenteriae (strain ATCC 49526 / WA1).